We begin with the raw amino-acid sequence, 425 residues long: Glutamyl-tRNA reductase (425 aa).

Substrate-binding positions include 49–52 (TCNR), serine 107, 112–114 (EPQ), and glutamine 118. The Nucleophile role is filled by cysteine 50. 187–192 (GAGETI) serves as a coordination point for NADP(+).

It belongs to the glutamyl-tRNA reductase family. As to quaternary structure, homodimer.

It catalyses the reaction (S)-4-amino-5-oxopentanoate + tRNA(Glu) + NADP(+) = L-glutamyl-tRNA(Glu) + NADPH + H(+). The protein operates within porphyrin-containing compound metabolism; protoporphyrin-IX biosynthesis; 5-aminolevulinate from L-glutamyl-tRNA(Glu): step 1/2. Functionally, catalyzes the NADPH-dependent reduction of glutamyl-tRNA(Glu) to glutamate 1-semialdehyde (GSA). The sequence is that of Glutamyl-tRNA reductase from Pseudomonas putida (strain ATCC 700007 / DSM 6899 / JCM 31910 / BCRC 17059 / LMG 24140 / F1).